The chain runs to 206 residues: N-(5'-phosphoribosyl)anthranilate isomerase (206 aa).

It belongs to the TrpF family.

It carries out the reaction N-(5-phospho-beta-D-ribosyl)anthranilate = 1-(2-carboxyphenylamino)-1-deoxy-D-ribulose 5-phosphate. The protein operates within amino-acid biosynthesis; L-tryptophan biosynthesis; L-tryptophan from chorismate: step 3/5. The protein is N-(5'-phosphoribosyl)anthranilate isomerase of Pseudomonas syringae pv. tomato (strain ATCC BAA-871 / DC3000).